The following is a 194-amino-acid chain: CMRF35-like molecule 5 (194 aa).

A signal peptide spans Met1–Ala18. The region spanning Ala19–Asn125 is the Ig-like V-type domain. At Ala19–His165 the chain is on the extracellular side. N-linked (GlcNAc...) asparagine glycosylation is present at Asn28. Cys39 and Cys107 are disulfide-bonded. The chain crosses the membrane as a helical span at residues Phe166–Trp186. The Cytoplasmic segment spans residues Val187–Ser194.

Belongs to the CD300 family. Forms complexes with the CD300 family members with exception of CD300c. Post-translationally, N-glycosylated. Expression seems restricted to cells of myeloid lineage.

The protein resides in the cell membrane. The chain is CMRF35-like molecule 5 (CD300LD) from Homo sapiens (Human).